The sequence spans 162 residues: uncharacterized protein (162 aa).

To R.meliloti R02472.

This is an uncharacterized protein from Escherichia coli (strain K12).